We begin with the raw amino-acid sequence, 347 residues long: UDP-3-O-acylglucosamine N-acyltransferase (347 aa).

The Proton acceptor role is filled by His-241.

The protein belongs to the transferase hexapeptide repeat family. LpxD subfamily. As to quaternary structure, homotrimer.

It catalyses the reaction a UDP-3-O-[(3R)-3-hydroxyacyl]-alpha-D-glucosamine + a (3R)-hydroxyacyl-[ACP] = a UDP-2-N,3-O-bis[(3R)-3-hydroxyacyl]-alpha-D-glucosamine + holo-[ACP] + H(+). Its pathway is bacterial outer membrane biogenesis; LPS lipid A biosynthesis. Functionally, catalyzes the N-acylation of UDP-3-O-acylglucosamine using 3-hydroxyacyl-ACP as the acyl donor. Is involved in the biosynthesis of lipid A, a phosphorylated glycolipid that anchors the lipopolysaccharide to the outer membrane of the cell. This is UDP-3-O-acylglucosamine N-acyltransferase from Neisseria gonorrhoeae (strain NCCP11945).